The following is a 438-amino-acid chain: Cyanidin-3-O-glucoside 2-O-glucuronosyltransferase (438 aa).

UDP-alpha-D-glucuronate-binding positions include S264, 315 to 316 (WV), 333 to 341 (HCGWSSTME), and 355 to 358 (QFDQ).

This sequence belongs to the UDP-glycosyltransferase family. As to quaternary structure, monomer. Expressed in petals. Not detected in sepals, stems, leaves, tubular corollas and white petals.

It localises to the cytoplasm. It catalyses the reaction cyanidin 3-O-beta-D-glucoside + UDP-alpha-D-glucuronate = cyanidin 3-O-(2-O-beta-D-glucuronosyl)-beta-D-glucoside + UDP + H(+). Inhibited by copper, mercury, UDP, UTP and partially by calcium, cadmium, iron and UMP. Not affected by cobalt, magnesium, manganese, zinc, nickel, tin, uridine, sadium malonate and glucose. Its function is as follows. Involved in the production of glucuronosylated anthocyanins that are the origin of the red coloration of flowers. Can use cyanidin 3-O-6''-O-malonylglucoside, cyanidin 3-O-glucoside and delphinidin 3-O-glucosideas substrates, but not pelargonidin 3-O-glucoside, cyanidin 3-O-3'',6''-O-dimalonylglucoside, pelargonidin 3,5-O-diglucoside, pelargonidin 3-O-6''-O-malonylglucoside-5-O-glucoside, quercetin 3-O-glucoside, quercetin 3-O-6''-O-malonylglucoside, daidzin, genistin,7-O-6''-O-malonylglucosides of daidzein and genistein, cyanidin, quercetin, daidzein, genistein p-Nitrophenyl beta-D-glucopyranoside, beta-estradiol, 17alpha-estradiol, 1-naphthol, 2-naphthol, 4-methylumbelliferone, and p-nitrophenol. Highly specific for UDP-glucuronate (UDP-GlcUA). Arg-25 is decisive with respect to UDP-sugar specificity. This Bellis perennis (English daisy) protein is Cyanidin-3-O-glucoside 2-O-glucuronosyltransferase (UGAT).